Here is a 561-residue protein sequence, read N- to C-terminus: Potassium-transporting ATPase potassium-binding subunit (561 aa).

The next 10 helical transmembrane spans lie at 4–24, 65–85, 133–153, 177–197, 253–273, 285–305, 380–400, 417–437, 484–504, and 528–548; these read IVMQ…PLGI, AVSV…VLML, IGLT…LFAV, LYIL…QGVV, FTNL…VVMF, AIMT…TISE, GLYG…LLVG, MVCL…AVAV, MVGA…ALYL, and FIGL…LPAL.

Belongs to the KdpA family. In terms of assembly, the system is composed of three essential subunits: KdpA, KdpB and KdpC.

It localises to the cell membrane. Part of the high-affinity ATP-driven potassium transport (or Kdp) system, which catalyzes the hydrolysis of ATP coupled with the electrogenic transport of potassium into the cytoplasm. This subunit binds the extracellular potassium ions and delivers the ions to the membrane domain of KdpB through an intramembrane tunnel. The sequence is that of Potassium-transporting ATPase potassium-binding subunit from Listeria monocytogenes serovar 1/2a (strain ATCC BAA-679 / EGD-e).